Reading from the N-terminus, the 69-residue chain is DNA-directed RNA polymerase subunit omega (69 aa).

This sequence belongs to the RNA polymerase subunit omega family. As to quaternary structure, the RNAP catalytic core consists of 2 alpha, 1 beta, 1 beta' and 1 omega subunit. When a sigma factor is associated with the core the holoenzyme is formed, which can initiate transcription.

The enzyme catalyses RNA(n) + a ribonucleoside 5'-triphosphate = RNA(n+1) + diphosphate. Its function is as follows. Promotes RNA polymerase assembly. Latches the N- and C-terminal regions of the beta' subunit thereby facilitating its interaction with the beta and alpha subunits. The polypeptide is DNA-directed RNA polymerase subunit omega (Geotalea daltonii (strain DSM 22248 / JCM 15807 / FRC-32) (Geobacter daltonii)).